Reading from the N-terminus, the 132-residue chain is NAD(P) transhydrogenase subunit alpha part 2 (132 aa).

A run of 3 helical transmembrane segments spans residues 43 to 63, 72 to 92, and 103 to 123; these read PLVFAITIFVLASFVGYYVVW, PLMSITNAISGIIVISSMIAI, and LLGSFATLLASINIFGGFIVT.

Complex of an alpha and a beta chain; in Rickettsia, the alpha chain seems to be made of two subunits.

It is found in the cell inner membrane. The enzyme catalyses NAD(+) + NADPH + H(+)(in) = NADH + NADP(+) + H(+)(out). Functionally, the transhydrogenation between NADH and NADP is coupled to respiration and ATP hydrolysis and functions as a proton pump across the membrane. In Rickettsia prowazekii (strain Madrid E), this protein is NAD(P) transhydrogenase subunit alpha part 2 (pntAB).